Consider the following 344-residue polypeptide: MHYLMKLFFSLSLFFGINGAVGSNQPSQANKNPKLFVFGNSYADTGNMKPTALSWKLPYGITFPGKPSGRYSDGLTATDFLAKQLGAKLPYLWRTHGKKKVKLNRGMNFAFGGSEVFDSPVDRSPNISTQVGFLVNLALARRVYTIDGDLASSYALLSYSGTDYYGFIDQNPNMAAYPAFVEFIVEDIQYSLGIMNGLKFKNIAVTSLHPLGCLPRVTVASSFRSCNESYSDLVRLHNESLKKAVAKLNKEDKFRTKGDRFVIVDLHKAFMTILEKKGNKRFKSPLKPCCEGDCARMDMKGAKKYTLCNDPKSAFFWDEINPTQEGWRSIYSLLGKSLTESLTK.

The first 19 residues, 1–19 (MHYLMKLFFSLSLFFGING), serve as a signal peptide directing secretion. Ser41 functions as the Nucleophile in the catalytic mechanism. N-linked (GlcNAc...) asparagine glycans are attached at residues Asn126, Asn227, and Asn238. Asp318 is an active-site residue.

It belongs to the 'GDSL' lipolytic enzyme family.

Its subcellular location is the secreted. The protein is GDSL esterase/lipase At5g03590 of Arabidopsis thaliana (Mouse-ear cress).